The primary structure comprises 101 residues: Small ribosomal subunit protein uS14A (101 aa).

The interval 35-56 is disordered; that stretch reads TSSYEQRLDAQRALSRQPRDAS.

The protein belongs to the universal ribosomal protein uS14 family. In terms of assembly, part of the 30S ribosomal subunit. Contacts proteins S3 and S10.

In terms of biological role, binds 16S rRNA, required for the assembly of 30S particles and may also be responsible for determining the conformation of the 16S rRNA at the A site. In Mycobacterium marinum (strain ATCC BAA-535 / M), this protein is Small ribosomal subunit protein uS14A.